We begin with the raw amino-acid sequence, 450 residues long: Tubulin alpha-1 chain (450 aa).

Gln-11 provides a ligand contact to GTP. N6-acetyllysine is present on Lys-40. Positions 71, 140, 144, 145, 179, 206, and 228 each coordinate GTP. Residue Glu-71 participates in Mg(2+) binding. Glu-254 is a catalytic residue.

This sequence belongs to the tubulin family. As to quaternary structure, dimer of alpha and beta chains. A typical microtubule is a hollow water-filled tube with an outer diameter of 25 nm and an inner diameter of 15 nM. Alpha-beta heterodimers associate head-to-tail to form protofilaments running lengthwise along the microtubule wall with the beta-tubulin subunit facing the microtubule plus end conferring a structural polarity. Microtubules usually have 13 protofilaments but different protofilament numbers can be found in some organisms and specialized cells. Interacts with Ote. The cofactor is Mg(2+). In terms of processing, undergoes a tyrosination/detyrosination cycle, the cyclic removal and re-addition of a C-terminal tyrosine residue by the enzymes tubulin tyrosine carboxypeptidase (TTCP) and tubulin tyrosine ligase (TTL), respectively. Post-translationally, acetylation of alpha chains at Lys-40 stabilizes microtubules and affects affinity and processivity of microtubule motors. This modification has a role in multiple cellular functions, ranging from cell motility, cell cycle progression or cell differentiation to intracellular trafficking and signaling. During the early stages of oogenesis lky/Alpha-tubulin N-acetyltransferase 2 is the main acetyltransferase responsible for Lys-40 acetylation in germline cells while Atat/alpha-tubulin N-acetyltransferase 1 is the main acetyltransferase responsible for Lys-40 acetylation in somatic cells.

The protein resides in the cytoplasm. Its subcellular location is the cytoskeleton. The enzyme catalyses GTP + H2O = GDP + phosphate + H(+). In terms of biological role, tubulin is the major constituent of microtubules, a cylinder consisting of laterally associated linear protofilaments composed of alpha- and beta-tubulin heterodimers. Microtubules grow by the addition of GTP-tubulin dimers to the microtubule end, where a stabilizing cap forms. Below the cap, tubulin dimers are in GDP-bound state, owing to GTPase activity of alpha-tubulin. This is Tubulin alpha-1 chain (alphaTub84B) from Drosophila melanogaster (Fruit fly).